The sequence spans 426 residues: Histidine--tRNA ligase (426 aa).

This sequence belongs to the class-II aminoacyl-tRNA synthetase family. Homodimer.

Its subcellular location is the cytoplasm. It catalyses the reaction tRNA(His) + L-histidine + ATP = L-histidyl-tRNA(His) + AMP + diphosphate + H(+). In Shewanella baltica (strain OS195), this protein is Histidine--tRNA ligase.